A 291-amino-acid polypeptide reads, in one-letter code: N-acetylmannosamine kinase (291 aa).

Residues 5–12 (AIDIGGTK) and 132–139 (GVGGGVVS) contribute to the ATP site. Residues His-156, Cys-166, Cys-168, and Cys-173 each contribute to the Zn(2+) site.

This sequence belongs to the ROK (NagC/XylR) family. NanK subfamily. Homodimer.

It catalyses the reaction an N-acyl-D-mannosamine + ATP = an N-acyl-D-mannosamine 6-phosphate + ADP + H(+). The protein operates within amino-sugar metabolism; N-acetylneuraminate degradation; D-fructose 6-phosphate from N-acetylneuraminate: step 2/5. Functionally, catalyzes the phosphorylation of N-acetylmannosamine (ManNAc) to ManNAc-6-P. The protein is N-acetylmannosamine kinase of Shigella boydii serotype 18 (strain CDC 3083-94 / BS512).